We begin with the raw amino-acid sequence, 485 residues long: Glutamyl-tRNA(Gln) amidotransferase subunit A (485 aa).

Active-site charge relay system residues include K76 and S151. Catalysis depends on S175, which acts as the Acyl-ester intermediate.

This sequence belongs to the amidase family. GatA subfamily. As to quaternary structure, heterotrimer of A, B and C subunits.

It carries out the reaction L-glutamyl-tRNA(Gln) + L-glutamine + ATP + H2O = L-glutaminyl-tRNA(Gln) + L-glutamate + ADP + phosphate + H(+). Functionally, allows the formation of correctly charged Gln-tRNA(Gln) through the transamidation of misacylated Glu-tRNA(Gln) in organisms which lack glutaminyl-tRNA synthetase. The reaction takes place in the presence of glutamine and ATP through an activated gamma-phospho-Glu-tRNA(Gln). This Thiobacillus denitrificans (strain ATCC 25259 / T1) protein is Glutamyl-tRNA(Gln) amidotransferase subunit A.